We begin with the raw amino-acid sequence, 246 residues long: Small ribosomal subunit protein uS2 (246 aa).

Belongs to the universal ribosomal protein uS2 family.

This is Small ribosomal subunit protein uS2 from Lachnoclostridium phytofermentans (strain ATCC 700394 / DSM 18823 / ISDg) (Clostridium phytofermentans).